Consider the following 43-residue polypeptide: Disintegrin CV (43 aa).

4 disulfide bridges follow: cysteine 1–cysteine 10, cysteine 6–cysteine 29, cysteine 7–cysteine 34, and cysteine 19–cysteine 36. A Disintegrin domain is found at 1–43; the sequence is CTTGPCCRQCKLKPAGTTCWRTSVSSHYCTGRSCECPSYPGNG. Residues 21-23 carry the Cell attachment site; atypical (RTS) motif; it reads RTS.

Belongs to the disintegrin family. Short disintegrin subfamily. Monomer. In terms of tissue distribution, expressed by the venom gland.

The protein localises to the secreted. Specifically interacts with the alpha-1/beta-1 integrin (ITGA1/ITGB1). Exhibits highly inhibitory effects on cell adhesion and cell migration to collagens I and IV. Also shows in vivo anti-angiogenic activity. This is Disintegrin CV from Cerastes vipera (Sahara sand viper).